The following is a 289-amino-acid chain: Acetyl-coenzyme A carboxylase carboxyl transferase subunit beta (289 aa).

The 262-residue stretch at 28 to 289 folds into the CoA carboxyltransferase N-terminal domain; the sequence is VMTKCPKCKK…QGGEMAVWQS (262 aa). The Zn(2+) site is built by Cys-32, Cys-35, Cys-51, and Cys-54. The C4-type zinc-finger motif lies at 32 to 54; it reads CPKCKKIMYTKEVLKNLKVCVNC.

The protein belongs to the AccD/PCCB family. In terms of assembly, acetyl-CoA carboxylase is a heterohexamer composed of biotin carboxyl carrier protein (AccB), biotin carboxylase (AccC) and two subunits each of ACCase subunit alpha (AccA) and ACCase subunit beta (AccD). The cofactor is Zn(2+).

It is found in the cytoplasm. It catalyses the reaction N(6)-carboxybiotinyl-L-lysyl-[protein] + acetyl-CoA = N(6)-biotinyl-L-lysyl-[protein] + malonyl-CoA. It functions in the pathway lipid metabolism; malonyl-CoA biosynthesis; malonyl-CoA from acetyl-CoA: step 1/1. Its function is as follows. Component of the acetyl coenzyme A carboxylase (ACC) complex. Biotin carboxylase (BC) catalyzes the carboxylation of biotin on its carrier protein (BCCP) and then the CO(2) group is transferred by the transcarboxylase to acetyl-CoA to form malonyl-CoA. The sequence is that of Acetyl-coenzyme A carboxylase carboxyl transferase subunit beta from Bacillus cereus (strain ZK / E33L).